Here is a 116-residue protein sequence, read N- to C-terminus: Non-specific lipid-transfer protein (116 aa).

An N-terminal signal peptide occupies residues 1 to 23 (MASMKVVCVALIMCIVIAPMAES). Cystine bridges form between cysteine 27-cysteine 74, cysteine 37-cysteine 51, cysteine 52-cysteine 97, and cysteine 72-cysteine 111.

Belongs to the plant LTP family.

Plant non-specific lipid-transfer proteins transfer phospholipids as well as galactolipids across membranes. May play a role in wax or cutin deposition in the cell walls of expanding epidermal cells and certain secretory tissues. In Cicer arietinum (Chickpea), this protein is Non-specific lipid-transfer protein.